Here is a 467-residue protein sequence, read N- to C-terminus: Adenosylhomocysteinase (467 aa).

Substrate-binding residues include T68, D144, and E169. An NAD(+)-binding site is contributed by T170–T172. Substrate is bound by residues K199 and D203. Residues N204, G233–G238, E256, N305, I326–H328, and N373 contribute to the NAD(+) site.

It belongs to the adenosylhomocysteinase family. It depends on NAD(+) as a cofactor.

The protein localises to the cytoplasm. The enzyme catalyses S-adenosyl-L-homocysteine + H2O = L-homocysteine + adenosine. The protein operates within amino-acid biosynthesis; L-homocysteine biosynthesis; L-homocysteine from S-adenosyl-L-homocysteine: step 1/1. Its function is as follows. May play a key role in the regulation of the intracellular concentration of adenosylhomocysteine. This chain is Adenosylhomocysteinase, found in Acinetobacter baylyi (strain ATCC 33305 / BD413 / ADP1).